A 466-amino-acid polypeptide reads, in one-letter code: ATP synthase subunit beta (466 aa).

ATP is bound at residue 156-163 (GGAGVGKT).

The protein belongs to the ATPase alpha/beta chains family. F-type ATPases have 2 components, CF(1) - the catalytic core - and CF(0) - the membrane proton channel. CF(1) has five subunits: alpha(3), beta(3), gamma(1), delta(1), epsilon(1). CF(0) has three main subunits: a(1), b(2) and c(9-12). The alpha and beta chains form an alternating ring which encloses part of the gamma chain. CF(1) is attached to CF(0) by a central stalk formed by the gamma and epsilon chains, while a peripheral stalk is formed by the delta and b chains.

Its subcellular location is the cell inner membrane. It catalyses the reaction ATP + H2O + 4 H(+)(in) = ADP + phosphate + 5 H(+)(out). Functionally, produces ATP from ADP in the presence of a proton gradient across the membrane. The catalytic sites are hosted primarily by the beta subunits. The chain is ATP synthase subunit beta from Dechloromonas aromatica (strain RCB).